The primary structure comprises 71 residues: Kunitz-type serine protease inhibitor HNTX-852 (71 aa).

The N-terminal stretch at 1-22 (DPSGSPHIRILPQETFEDICRL) is a signal peptide. Cystine bridges form between cysteine 20–cysteine 68 and cysteine 43–cysteine 64. Residues 23–68 (PSDSGDCLRFFEMWYFDGTTCTKFVYGGYGGNDNRFPTEKACMKRC) form the BPTI/Kunitz inhibitor domain.

Belongs to the venom Kunitz-type family. 03 (sub-Kunitz) subfamily. Expressed by the venom gland.

Its subcellular location is the secreted. Functionally, serine protease inhibitor that inhibits trypsin at a molar ratio of 1:1. The polypeptide is Kunitz-type serine protease inhibitor HNTX-852 (Cyriopagopus hainanus (Chinese bird spider)).